We begin with the raw amino-acid sequence, 86 residues long: MAEKRKYSRKYCKFTEAKIDFIDYKDTSLLKYCLSERFKIMPRRLTGTSKRYQEMVEKAIKRARHAAIIPYIVDRKNVVSNPFEGL.

Belongs to the bacterial ribosomal protein bS18 family. As to quaternary structure, part of the 30S ribosomal subunit. Forms a tight heterodimer with protein bS6.

Binds as a heterodimer with protein bS6 to the central domain of the 16S rRNA, where it helps stabilize the platform of the 30S subunit. In Campylobacter concisus (strain 13826), this protein is Small ribosomal subunit protein bS18.